Reading from the N-terminus, the 439-residue chain is 23S rRNA (uracil(1939)-C(5))-methyltransferase RlmD (439 aa).

Residues 5 to 63 (RKLEHKTYKLNIESFSHEGRGIAHFEDKIIFVSDALPGELVIANRTFSCAKFEEADAKE) form the TRAM domain. The [4Fe-4S] cluster site is built by C76, C82, C85, and C164. S-adenosyl-L-methionine-binding residues include Q271, F300, N305, E321, D348, and D370. Catalysis depends on C396, which acts as the Nucleophile.

Belongs to the class I-like SAM-binding methyltransferase superfamily. RNA M5U methyltransferase family. RlmD subfamily.

The enzyme catalyses uridine(1939) in 23S rRNA + S-adenosyl-L-methionine = 5-methyluridine(1939) in 23S rRNA + S-adenosyl-L-homocysteine + H(+). Its function is as follows. Catalyzes the formation of 5-methyl-uridine at position 1939 (m5U1939) in 23S rRNA. In Vesicomyosocius okutanii subsp. Calyptogena okutanii (strain HA), this protein is 23S rRNA (uracil(1939)-C(5))-methyltransferase RlmD.